Reading from the N-terminus, the 243-residue chain is 2-C-methyl-D-erythritol 4-phosphate cytidylyltransferase (243 aa).

It belongs to the IspD/TarI cytidylyltransferase family. IspD subfamily.

It carries out the reaction 2-C-methyl-D-erythritol 4-phosphate + CTP + H(+) = 4-CDP-2-C-methyl-D-erythritol + diphosphate. It functions in the pathway isoprenoid biosynthesis; isopentenyl diphosphate biosynthesis via DXP pathway; isopentenyl diphosphate from 1-deoxy-D-xylulose 5-phosphate: step 2/6. In terms of biological role, catalyzes the formation of 4-diphosphocytidyl-2-C-methyl-D-erythritol from CTP and 2-C-methyl-D-erythritol 4-phosphate (MEP). This Chlorobium phaeovibrioides (strain DSM 265 / 1930) (Prosthecochloris vibrioformis (strain DSM 265)) protein is 2-C-methyl-D-erythritol 4-phosphate cytidylyltransferase.